We begin with the raw amino-acid sequence, 422 residues long: MLRVRCLRGGSRGAEAVHYIGSMLRKSFVGWVQRSFQSTQAAAVSEKPCAADEKVRDTAAQECPVCSYNEWDPLEEVIVGRPENANVPPFSVEVKANTYEKYWPFYQKHGGQSFPVDHVKKAIEEIEEMCKVLKHEGVIVQRPEVIDWSVKYKTPDFESTGMYAAMPRDILLVVGNEIIEAPMAWRARFFEYRAYRPLIKDYFRRGAKWTTAPKPTMADELYDQDYPIRTVEDRHKLAAMGKFVTTEFEPCFDAADFMRAGRDIFAQRSQVTNYLGIEWMRRHLAPDYKVHIISFKDPNPMHIDATFNIIGPGLVLSNPDRPCHQIELFKKAGWTVVTPPTPLIPDNHPLWMSSKWLSMNVLMLDEKRVMVDANETSIHKMFEKLGISTIKVNIRHANSLGGGFHCWTCDIRRRGTLQSYFR.

Residues 1–37 (MLRVRCLRGGSRGAEAVHYIGSMLRKSFVGWVQRSFQ) constitute a mitochondrion transit peptide. Residues Asp-253 and His-302 contribute to the active site. The active-site Amidino-cysteine intermediate is the Cys-406.

This sequence belongs to the amidinotransferase family. Homodimer. Ubiquitously expressed in adult tissues, with highest levels in muscle and intermediate levels in eye, heart, liver, stomach and testis. In stage 28 embryos, expression is higher in the dorsal and ventral parts of the trunk than in the head. In middle gastrulae, expression is highest around the yolk plug, while in stage 15 and tailbud stage embryos, expression is largely restricted to the region around the presumptive notochord and gut.

It is found in the mitochondrion inner membrane. It carries out the reaction L-arginine + glycine = guanidinoacetate + L-ornithine. The protein operates within amine and polyamine biosynthesis; creatine biosynthesis; creatine from L-arginine and glycine: step 1/2. In terms of biological role, catalyzes the biosynthesis of guanidinoacetate, the immediate precursor of creatine. Creatine plays a vital role in energy metabolism in muscle tissues. May play a role in embryonic and central nervous system development. This chain is Glycine amidinotransferase, mitochondrial, found in Xenopus laevis (African clawed frog).